A 732-amino-acid polypeptide reads, in one-letter code: Acylamino-acid-releasing enzyme (732 aa).

Blocked amino end (Met); alternate is present on M1. M1 is modified (N-acetylmethionine; alternate). Residues S185 and S187 each carry the phosphoserine modification. Active-site charge relay system residues include S587, D675, and H707.

This sequence belongs to the peptidase S9C family. As to quaternary structure, homotetramer.

Its subcellular location is the cytoplasm. It catalyses the reaction Cleavage of an N-acetyl or N-formyl amino acid from the N-terminus of a polypeptide.. Its activity is regulated as follows. Homotetramerization is required for activity. Tetramerization results in the formation of a gated channel which is involved in substrate selection and substrate access to the catalytic sites. In terms of biological role, this enzyme catalyzes the hydrolysis of the N-terminal peptide bond of an N-acetylated peptide to generate an N-acetylated amino acid and a peptide with a free N-terminus. It preferentially cleaves off Ac-Ala, Ac-Met and Ac-Ser. Also, involved in the degradation of oxidized and glycated proteins. The chain is Acylamino-acid-releasing enzyme (Apeh) from Rattus norvegicus (Rat).